The sequence spans 150 residues: Ribosome maturation factor RimP (150 aa).

It belongs to the RimP family.

Its subcellular location is the cytoplasm. Functionally, required for maturation of 30S ribosomal subunits. The chain is Ribosome maturation factor RimP from Thermotoga maritima (strain ATCC 43589 / DSM 3109 / JCM 10099 / NBRC 100826 / MSB8).